The primary structure comprises 746 residues: Proline--tRNA ligase (746 aa).

The interval 1–223 is required for editing of incorrectly charged tRNA; that stretch reads MNNNTNGEII…NSNNNNNNNN (223 aa). The segment covering 181 to 201 has biased composition (basic and acidic residues); it reads TSKARVDKKEDVQEEMAKNEE. The disordered stretch occupies residues 181-226; the sequence is TSKARVDKKEDVQEEMAKNEELQNNNNNNKNNSNSNNNNNNNNNHI. The span at 204–224 shows a compositional bias: low complexity; sequence NNNNNNKNNSNSNNNNNNNNN. L-proline is bound at residue Arg-390. Residues 390-394, 401-405, and 475-477 contribute to the ATP site; these read RWEFK, RTREF, and QAA. His-480 is a binding site for L-proline. 512-514 lines the ATP pocket; sequence TTR.

Belongs to the class-II aminoacyl-tRNA synthetase family. ProS type 3 subfamily. In terms of assembly, homodimer.

The protein resides in the cytoplasm. The catalysed reaction is tRNA(Pro) + L-proline + ATP = L-prolyl-tRNA(Pro) + AMP + diphosphate. Its activity is regulated as follows. Inhibited by the quinazolinone-based compound febrifugine from the Chinese plant Dichroa febrifuga which is used to treat malaria-associated fever. Also inhibited by febrifugine derivatives such as halofuginone. Catalyzes the attachment of proline to tRNA(Pro) in a two-step reaction: proline is first activated by ATP to form Pro-AMP and then transferred to the acceptor end of tRNA(Pro). Functions in trans to edit the amino acid moiety from incorrectly charged Ala-tRNA(Pro). Has no activity on correctly charged Pro-tRNA(Pro) or Ala-tRNA(Ala). This is Proline--tRNA ligase from Plasmodium falciparum (isolate 3D7).